Reading from the N-terminus, the 1946-residue chain is Chromodomain-helicase-DNA-binding protein 5 (1946 aa).

Disordered stretches follow at residues 1 to 140, 236 to 272, and 285 to 340; these read MRGP…SGQL, VPQTLPIRKAKTKEGKGPGVRKKNKGAKDSKKKGRGK, and SKRK…GDGY. Composition is skewed to acidic residues over residues 17 to 37 and 72 to 90; these read EEMENEEEMSEEEDGGLEGFE and NDEMSDNEEDLEEKSESEG. 2 stretches are compositionally biased toward basic residues: residues 96-118 and 254-272; these read TKKKKKKLKEKKEKKEKKEKRKK and GVRKKNKGAKDSKKKGRGK. The segment covering 293–303 has biased composition (acidic residues); that stretch reads SEEDEREDSDL. Residues 323-332 show a composition bias toward basic residues; sequence KKNKRRRKKK. PHD-type zinc fingers lie at residues 345-392 and 418-465; these read QDYC…CEKE and MEFC…CTCP. Positions 345-655 are histone-binding; sequence QDYCEVCQQG…HRELMLGEDA (311 aa). The region spanning 499–556 is the Chromo 1 domain; sequence MPPPRPLEGIPEREFFVKWAGLSYWHCSWVKELQLELYHTVMYRNYQRKNDMDEPPPF. The interval 551 to 573 is disordered; that stretch reads DEPPPFDYGSGDEDGKSEKRKNK. Over residues 563–573 the composition is skewed to basic and acidic residues; that stretch reads EDGKSEKRKNK. The Chromo 2 domain maps to 594–655; that stretch reads MMVHRILNHS…HRELMLGEDA (62 aa). Residues 714–898 enclose the Helicase ATP-binding domain; it reads RFSWAQGTDT…FHLLNFLTPE (185 aa). 727-734 contacts ATP; the sequence is DEMGLGKT. The DEAH box signature appears at 849 to 852; the sequence is DEAH. Residues 1030-1195 form the Helicase C-terminal domain; it reads LLQKMLKKLR…MTKQELDDIL (166 aa). Disordered regions lie at residues 1210–1254, 1353–1413, 1525–1566, 1579–1696, and 1926–1946; these read MMSQ…VEDS, YNDA…LPPL, KYST…APLG, DEKE…EDKN, and SFPAEPSHLPNPRGREKLQPF. Polar residues predominate over residues 1212–1230; it reads SQGQRPTTPIPDIQSTKGG. Composition is skewed to acidic residues over residues 1357–1368 and 1378–1387; these read SQEDQEWQDELS and SEDEDEDFEE. Q1392 is subject to N5-methylglutamine. Pro residues predominate over residues 1551-1564; it reads TPVPASPAQLPPAP. Residue S1556 is modified to Phosphoserine. 3 stretches are compositionally biased toward basic and acidic residues: residues 1602–1629, 1637–1654, and 1661–1676; these read DRVEGEDKHQSSDSKDRAREERTEEVEK, PLKEEVLPDKEPIPDKPE, and GDFRPDDPKTEEKEPG.

This sequence belongs to the SNF2/RAD54 helicase family. Component of the nucleosome remodeling and deacetylase (NuRD) repressor complex, composed of core proteins MTA1, MTA2, MTA3, RBBP4, RBBP7, HDAC1, HDAC2, MBD2, MBD3, and peripherally associated proteins CDK2AP1, CDK2AP2, GATAD2A, GATAD2B, CHD3, CHD4 and CHD5. The exact stoichiometry of the NuRD complex is unknown, and some subunits such as MBD2 and MBD3, GATAD2A and GATAD2B, and CHD3, CHD4 and CHD5 define mutually exclusive NuRD complexes. Interacts with HDAC2. Methylated at Gln-1392 by N6AMT1. As to expression, specifically expressed by neurons in brain, retina and adrenal gland (at protein level). Also detected in testis.

It localises to the nucleus. The protein localises to the chromosome. The enzyme catalyses ATP + H2O = ADP + phosphate + H(+). In terms of biological role, ATP-dependent chromatin-remodeling factor that binds DNA through histones and regulates gene transcription. May specifically recognize and bind trimethylated 'Lys-27' (H3K27me3) and non-methylated 'Lys-4' of histone H3. Acts as a component of the histone deacetylase NuRD complex which participates in the remodeling of chromatin. Plays a role in the development of the nervous system by activating the expression of genes promoting neuron terminal differentiation. In parallel, it may also positively regulate the trimethylation of histone H3 at 'Lys-27' thereby specifically repressing genes that promote the differentiation into non-neuronal cell lineages. Regulates the expression of genes involved in cell proliferation and differentiation. Downstream activated genes may include CDKN2A that positively regulates the p53/TP53 pathway, which in turn, prevents cell proliferation. In spermatogenesis, it probably regulates histone hyperacetylation and the replacement of histones by transition proteins in chromatin, a crucial step in the condensation of spermatid chromatin and the production of functional spermatozoa. The sequence is that of Chromodomain-helicase-DNA-binding protein 5 (Chd5) from Mus musculus (Mouse).